Reading from the N-terminus, the 107-residue chain is Universal stress protein B homolog (107 aa).

A run of 2 helical transmembrane segments spans residues 6–23 (TILFALMVVTCVNWARYF) and 89–106 (LFILSSALLGVTLLSSFI).

This sequence belongs to the universal stress protein B family.

It is found in the cell inner membrane. This Vibrio atlanticus (strain LGP32) (Vibrio splendidus (strain Mel32)) protein is Universal stress protein B homolog.